The following is a 70-amino-acid chain: DNA-directed RNA polymerase subunit omega (70 aa).

It belongs to the RNA polymerase subunit omega family. In terms of assembly, the RNAP catalytic core consists of 2 alpha, 1 beta, 1 beta' and 1 omega subunit. When a sigma factor is associated with the core the holoenzyme is formed, which can initiate transcription.

The catalysed reaction is RNA(n) + a ribonucleoside 5'-triphosphate = RNA(n+1) + diphosphate. Promotes RNA polymerase assembly. Latches the N- and C-terminal regions of the beta' subunit thereby facilitating its interaction with the beta and alpha subunits. The sequence is that of DNA-directed RNA polymerase subunit omega from Caldanaerobacter subterraneus subsp. tengcongensis (strain DSM 15242 / JCM 11007 / NBRC 100824 / MB4) (Thermoanaerobacter tengcongensis).